The sequence spans 652 residues: Sciellin (652 aa).

Positions 1-10 (MSNFSSRKKS) are enriched in basic residues. Disordered regions lie at residues 1–29 (MSNF…QQGF) and 43–180 (SWIK…KPLG). Basic and acidic residues predominate over residues 66–95 (NSHDALDRKLIERDEPKATISRYRSEDMLD). Lys-82 is modified (N6-acetyllysine). The segment covering 97–110 (TLSSFRTPQSTKTP) has biased composition (polar residues). Low complexity predominate over residues 111–130 (AVSSFNANTTATASTPATTP). Positions 161–170 (LHPPLPPKPC) are enriched in pro residues. 15 repeat units span residues 207–226 (TEDL…TDKG), 227–241 (EELD…SLNR), 242–261 (NQGL…LDKR), 262–281 (AQSL…DGKG), 282–301 (NQAF…DRRS), 302–320 (QDLR…IGRR), 321–340 (KQDL…NMKR), 341–360 (GKSL…SNKG), 361–380 (GPSL…ANQR), 381–398 (DQDL…NRSS), 399–418 (QHSL…TTAR), 419–438 (HQDL…NNQR), 439–458 (NHDV…CEQS), 459–477 (EELD…NTNG), and 478–496 (GQDL…EKNG). A 15 X approximate tandem repeats region spans residues 207 to 496 (TEDLDDIIRV…VNSHVAEKNG (290 aa)). Ser-264 carries the post-translational modification Phosphoserine. Position 343 is a phosphoserine (Ser-343). The tract at residues 353 to 385 (EVNRSNKGGPSLDNFTKGVPARSRANQRDQDLD) is disordered. The disordered stretch occupies residues 436-455 (NQRNHDVDSTIRGNPTGTRC). Positions 446-455 (IRGNPTGTRC) are enriched in polar residues. Positions 583–649 (DMCTYCRKPL…EPCYSKVMAK (67 aa)) constitute an LIM zinc-binding domain.

Expressed in the upper layers of stratified epithelia, including, ependyma and choroid plexus of the brain ventricles.

The protein localises to the cytoplasm. It is found in the membrane. In terms of biological role, may function in the assembly or regulation of proteins in the cornified envelope. The LIM domain may be involved in homotypic or heterotypic associations and may function to localize sciellin to the cornified envelope. The chain is Sciellin (Scel) from Mus musculus (Mouse).